The primary structure comprises 460 residues: Protein unc-93 homolog A (460 aa).

The next 5 helical transmembrane spans lie at 7–27, 41–61, 68–88, 89–109, and 139–159; these read ILIV…LQSL, SLSV…PIVI, WTIV…FYAS, WYTL…LWAA, and LFFL…SLIF. Residues Asn168 and Asn189 are each glycosylated (N-linked (GlcNAc...) asparagine). The next 6 membrane-spanning stretches (helical) occupy residues 203-223, 292-312, 321-341, 345-365, 390-410, and 412-432; these read TLLG…AVFL, FVGY…LLFG, ICLF…LLLW, PNDF…DAIW, LWES…CVSV, and LYIL…VEYL.

It belongs to the unc-93 family.

Its subcellular location is the membrane. The chain is Protein unc-93 homolog A (unc93a) from Xenopus laevis (African clawed frog).